The following is a 209-amino-acid chain: Glycerol-3-phosphate acyltransferase (209 aa).

A run of 5 helical transmembrane segments spans residues 13–33 (ALIA…GLLL), 63–83 (LAAA…LIAQ), 94–114 (PGLL…WLGF), 127–147 (LLGI…SIAF), and 151–171 (YSSL…WILG).

This sequence belongs to the PlsY family. As to quaternary structure, probably interacts with PlsX.

Its subcellular location is the cell inner membrane. It catalyses the reaction an acyl phosphate + sn-glycerol 3-phosphate = a 1-acyl-sn-glycero-3-phosphate + phosphate. It participates in lipid metabolism; phospholipid metabolism. Catalyzes the transfer of an acyl group from acyl-phosphate (acyl-PO(4)) to glycerol-3-phosphate (G3P) to form lysophosphatidic acid (LPA). This enzyme utilizes acyl-phosphate as fatty acyl donor, but not acyl-CoA or acyl-ACP. This Allorhizobium ampelinum (strain ATCC BAA-846 / DSM 112012 / S4) (Agrobacterium vitis (strain S4)) protein is Glycerol-3-phosphate acyltransferase.